The primary structure comprises 141 residues: MEMLQGLLLWLLLNVGGVWASRGPLRPLCRPINATLAAENEACPVCVTFTTTICAGYCPSMVRVLPAILPPMPQPVCTYHELHFASIRLPGCPPGVDPMVSFPVALSCRCGPCRLSNSDCGGPRAQPLACDRPPLPGLLFL.

A signal peptide spans 1-20 (MEMLQGLLLWLLLNVGGVWA). 6 cysteine pairs are disulfide-bonded: C29-C77, C43-C92, C46-C130, C54-C108, C58-C110, and C113-C120. Residue N33 is glycosylated (N-linked (GlcNAc...) asparagine).

It belongs to the glycoprotein hormones subunit beta family. In terms of assembly, heterodimer of a common alpha chain and a unique beta chain which confers biological specificity to thyrotropin, lutropin, follitropin and gonadotropin.

Its subcellular location is the secreted. Promotes spermatogenesis and ovulation by stimulating the testes and ovaries to synthesize steroids. This is Lutropin subunit beta (LHB) from Ailurus fulgens (Himalayan red panda).